Reading from the N-terminus, the 195-residue chain is Elongation factor Ts (195 aa).

Positions Thr81 to Val84 are involved in Mg(2+) ion dislocation from EF-Tu.

It belongs to the EF-Ts family.

It is found in the cytoplasm. In terms of biological role, associates with the EF-Tu.GDP complex and induces the exchange of GDP to GTP. It remains bound to the aminoacyl-tRNA.EF-Tu.GTP complex up to the GTP hydrolysis stage on the ribosome. In Rubrobacter xylanophilus (strain DSM 9941 / JCM 11954 / NBRC 16129 / PRD-1), this protein is Elongation factor Ts.